We begin with the raw amino-acid sequence, 76 residues long: Omega-conotoxin-like TxO3 (76 aa).

An N-terminal signal peptide occupies residues 1-22 (MKLTCVVIVAVLFLTAWTFVTA). A propeptide spanning residues 23–52 (VPHSSNALENLYLKAHHEMNNPEASELNKR) is cleaved from the precursor. Cystine bridges form between cysteine 53–cysteine 67, cysteine 60–cysteine 71, and cysteine 66–cysteine 75.

This sequence belongs to the conotoxin O1 superfamily. As to expression, expressed by the venom duct.

The protein resides in the secreted. Functionally, omega-conotoxins act at presynaptic membranes, they bind and block voltage-gated calcium channels (Cav). In Conus textile (Cloth-of-gold cone), this protein is Omega-conotoxin-like TxO3 (TXO3).